Here is a 313-residue protein sequence, read N- to C-terminus: Homoserine O-succinyltransferase (313 aa).

Cysteine 142 acts as the Acyl-thioester intermediate in catalysis. Residues lysine 163 and serine 192 each contribute to the substrate site. Catalysis depends on histidine 235, which acts as the Proton acceptor. Residue glutamate 237 is part of the active site. Arginine 249 is a substrate binding site.

This sequence belongs to the MetA family.

It localises to the cytoplasm. The catalysed reaction is L-homoserine + succinyl-CoA = O-succinyl-L-homoserine + CoA. It participates in amino-acid biosynthesis; L-methionine biosynthesis via de novo pathway; O-succinyl-L-homoserine from L-homoserine: step 1/1. In terms of biological role, transfers a succinyl group from succinyl-CoA to L-homoserine, forming succinyl-L-homoserine. The chain is Homoserine O-succinyltransferase from Shewanella baltica (strain OS223).